Reading from the N-terminus, the 247-residue chain is Lipoprotein-releasing system ATP-binding protein LolD 2 (247 aa).

Residues 19 to 247 enclose the ABC transporter domain; sequence LEARKLVKSY…QDGRLQACGG (229 aa). 56-63 is an ATP binding site; the sequence is GASGSGKT.

The protein belongs to the ABC transporter superfamily. Lipoprotein translocase (TC 3.A.1.125) family. The complex is composed of two ATP-binding proteins (LolD) and two transmembrane proteins (LolC and LolE).

It is found in the cell inner membrane. In terms of biological role, part of the ABC transporter complex LolCDE involved in the translocation of mature outer membrane-directed lipoproteins, from the inner membrane to the periplasmic chaperone, LolA. Responsible for the formation of the LolA-lipoprotein complex in an ATP-dependent manner. This chain is Lipoprotein-releasing system ATP-binding protein LolD 2, found in Chlorobaculum tepidum (strain ATCC 49652 / DSM 12025 / NBRC 103806 / TLS) (Chlorobium tepidum).